The sequence spans 278 residues: Polyamine aminopropyltransferase (278 aa).

The PABS domain occupies 3-240 (EGWFTEAVED…GWWSATLMVN (238 aa)). Gln33 is an S-methyl-5'-thioadenosine binding site. Positions 64 and 88 each coordinate spermidine. S-methyl-5'-thioadenosine contacts are provided by residues Glu108 and 139–140 (DG). Catalysis depends on Asp158, which acts as the Proton acceptor. Position 158–161 (158–161 (DSTD)) interacts with spermidine. Pro165 provides a ligand contact to S-methyl-5'-thioadenosine.

Belongs to the spermidine/spermine synthase family. In terms of assembly, homodimer or homotetramer.

It localises to the cytoplasm. The catalysed reaction is S-adenosyl 3-(methylsulfanyl)propylamine + putrescine = S-methyl-5'-thioadenosine + spermidine + H(+). It functions in the pathway amine and polyamine biosynthesis; spermidine biosynthesis; spermidine from putrescine: step 1/1. In terms of biological role, catalyzes the irreversible transfer of a propylamine group from the amino donor S-adenosylmethioninamine (decarboxy-AdoMet) to putrescine (1,4-diaminobutane) to yield spermidine. This Halorhodospira halophila (strain DSM 244 / SL1) (Ectothiorhodospira halophila (strain DSM 244 / SL1)) protein is Polyamine aminopropyltransferase.